We begin with the raw amino-acid sequence, 350 residues long: Nicotinate-nucleotide--dimethylbenzimidazole phosphoribosyltransferase (350 aa).

Residue E317 is the Proton acceptor of the active site.

It belongs to the CobT family.

It catalyses the reaction 5,6-dimethylbenzimidazole + nicotinate beta-D-ribonucleotide = alpha-ribazole 5'-phosphate + nicotinate + H(+). Its pathway is nucleoside biosynthesis; alpha-ribazole biosynthesis; alpha-ribazole from 5,6-dimethylbenzimidazole: step 1/2. In terms of biological role, catalyzes the synthesis of alpha-ribazole-5'-phosphate from nicotinate mononucleotide (NAMN) and 5,6-dimethylbenzimidazole (DMB). This Shewanella putrefaciens (strain CN-32 / ATCC BAA-453) protein is Nicotinate-nucleotide--dimethylbenzimidazole phosphoribosyltransferase.